Reading from the N-terminus, the 238-residue chain is Enolase-phosphatase E1 (238 aa).

The Mg(2+) site is built by Asp-14 and Glu-16. Substrate-binding positions include 128 to 129 (SS) and Lys-165. Asp-192 is a Mg(2+) binding site.

It belongs to the HAD-like hydrolase superfamily. MasA/MtnC family. As to quaternary structure, monomer. Requires Mg(2+) as cofactor.

It localises to the cytoplasm. The protein localises to the nucleus. The enzyme catalyses 5-methylsulfanyl-2,3-dioxopentyl phosphate + H2O = 1,2-dihydroxy-5-(methylsulfanyl)pent-1-en-3-one + phosphate. The protein operates within amino-acid biosynthesis; L-methionine biosynthesis via salvage pathway; L-methionine from S-methyl-5-thio-alpha-D-ribose 1-phosphate: step 3/6. It participates in amino-acid biosynthesis; L-methionine biosynthesis via salvage pathway; L-methionine from S-methyl-5-thio-alpha-D-ribose 1-phosphate: step 4/6. Bifunctional enzyme that catalyzes the enolization of 2,3-diketo-5-methylthiopentyl-1-phosphate (DK-MTP-1-P) into the intermediate 2-hydroxy-3-keto-5-methylthiopentenyl-1-phosphate (HK-MTPenyl-1-P), which is then dephosphorylated to form the acireductone 1,2-dihydroxy-3-keto-5-methylthiopentene (DHK-MTPene). The polypeptide is Enolase-phosphatase E1 (Fusarium vanettenii (strain ATCC MYA-4622 / CBS 123669 / FGSC 9596 / NRRL 45880 / 77-13-4) (Fusarium solani subsp. pisi)).